The following is a 496-amino-acid chain: Probable diguanylate cyclase DgcJ (496 aa).

A run of 2 helical transmembrane segments spans residues 11 to 31 and 305 to 325; these read FIAASVIVLTSSFLIFELVAS and ILYFITSSWKSVLFWILTALI. Residues 374–496 form the GGDEF domain; sequence SSVMFIAIDM…VNKQNKNSRS (123 aa). Asp-382 contacts Mg(2+). Positions 390, 395, and 399 each coordinate substrate. Asp-425 serves as a coordination point for Mg(2+). The active-site Proton acceptor is the Asp-425.

As to quaternary structure, homodimer. Mg(2+) serves as cofactor.

Its subcellular location is the cell inner membrane. The catalysed reaction is 2 GTP = 3',3'-c-di-GMP + 2 diphosphate. Its pathway is purine metabolism; 3',5'-cyclic di-GMP biosynthesis. In terms of biological role, catalyzes the synthesis of cyclic-di-GMP (c-di-GMP) via the condensation of 2 GTP molecules. The sequence is that of Probable diguanylate cyclase DgcJ from Escherichia coli (strain K12).